The following is a 446-amino-acid chain: Glutamyl-tRNA reductase (446 aa).

Residues 49 to 52 (TCNR), serine 109, 114 to 116 (ETQ), and glutamine 120 contribute to the substrate site. Residue cysteine 50 is the Nucleophile of the active site. 189–194 (GAGETG) lines the NADP(+) pocket.

Belongs to the glutamyl-tRNA reductase family. As to quaternary structure, homodimer.

It carries out the reaction (S)-4-amino-5-oxopentanoate + tRNA(Glu) + NADP(+) = L-glutamyl-tRNA(Glu) + NADPH + H(+). The protein operates within porphyrin-containing compound metabolism; protoporphyrin-IX biosynthesis; 5-aminolevulinate from L-glutamyl-tRNA(Glu): step 1/2. In terms of biological role, catalyzes the NADPH-dependent reduction of glutamyl-tRNA(Glu) to glutamate 1-semialdehyde (GSA). This Exiguobacterium sibiricum (strain DSM 17290 / CCUG 55495 / CIP 109462 / JCM 13490 / 255-15) protein is Glutamyl-tRNA reductase.